The sequence spans 259 residues: Glutamate racemase (259 aa).

Substrate-binding positions include 12-13 and 44-45; these read DS and YG. The active-site Proton donor/acceptor is the Cys75. Substrate is bound at residue 76-77; the sequence is NT. The Proton donor/acceptor role is filled by Cys186. 187–188 contributes to the substrate binding site; that stretch reads TH.

The protein belongs to the aspartate/glutamate racemases family.

It carries out the reaction L-glutamate = D-glutamate. Its pathway is cell wall biogenesis; peptidoglycan biosynthesis. In terms of biological role, provides the (R)-glutamate required for cell wall biosynthesis. The protein is Glutamate racemase of Clostridium novyi (strain NT).